The chain runs to 119 residues: Large ribosomal subunit protein bL20 (119 aa).

This sequence belongs to the bacterial ribosomal protein bL20 family.

In terms of biological role, binds directly to 23S ribosomal RNA and is necessary for the in vitro assembly process of the 50S ribosomal subunit. It is not involved in the protein synthesizing functions of that subunit. This chain is Large ribosomal subunit protein bL20, found in Rhodopseudomonas palustris (strain HaA2).